The primary structure comprises 389 residues: Chalcone synthase 1 (389 aa).

The active site involves cysteine 164.

It belongs to the thiolase-like superfamily. Chalcone/stilbene synthases family.

The catalysed reaction is (E)-4-coumaroyl-CoA + 3 malonyl-CoA + 3 H(+) = 2',4,4',6'-tetrahydroxychalcone + 3 CO2 + 4 CoA. It functions in the pathway secondary metabolite biosynthesis; flavonoid biosynthesis. In terms of biological role, the primary product of this enzyme is 4,2',4',6'-tetrahydroxychalcone (also termed naringenin-chalcone or chalcone) which can under specific conditions spontaneously isomerize into naringenin. The polypeptide is Chalcone synthase 1 (CHS1) (Trifolium subterraneum (Subterranean clover)).